The sequence spans 238 residues: Ubiquinone biosynthesis O-methyltransferase (238 aa).

4 residues coordinate S-adenosyl-L-methionine: Arg-38, Gly-58, Asp-79, and Met-124.

This sequence belongs to the methyltransferase superfamily. UbiG/COQ3 family.

It catalyses the reaction a 3-demethylubiquinol + S-adenosyl-L-methionine = a ubiquinol + S-adenosyl-L-homocysteine + H(+). It carries out the reaction a 3-(all-trans-polyprenyl)benzene-1,2-diol + S-adenosyl-L-methionine = a 2-methoxy-6-(all-trans-polyprenyl)phenol + S-adenosyl-L-homocysteine + H(+). Its pathway is cofactor biosynthesis; ubiquinone biosynthesis. In terms of biological role, O-methyltransferase that catalyzes the 2 O-methylation steps in the ubiquinone biosynthetic pathway. This is Ubiquinone biosynthesis O-methyltransferase from Acinetobacter baylyi (strain ATCC 33305 / BD413 / ADP1).